The following is a 280-amino-acid chain: Phosphatidylinositol N-acetylglucosaminyltransferase GPI2 subunit (280 aa).

The Cytoplasmic segment spans residues 1 to 53 (MTRSPWKRLLWLKQEYPDNYTDPSFIELRARQKAESNQKSDRKLSEAARAQIR). A helical membrane pass occupies residues 54–74 (LDFISFYQTILNTSFIYITFT). Position 75 (Tyr-75) is a topological domain, extracellular. A helical membrane pass occupies residues 76 to 96 (IYYYGFDPIPPTIFLSFITLI). At 97–108 (ISRTKVDPLLSS) the chain is on the cytoplasmic side. The chain crosses the membrane as a helical span at residues 109–129 (FMDVKSSLIITFAMLTLSPVL). Residues 130 to 135 (KSLSKT) lie on the Extracellular side of the membrane. The chain crosses the membrane as a helical span at residues 136–156 (TASDSIWTLSFWLTLWYIFVI). Residues 157–189 (SSTKSKDKPSNLSTNILVALVAVLSSRLSTTID) are Cytoplasmic-facing. A helical membrane pass occupies residues 190–210 (VFCFLLICIQLNIILPTYLSV). The Extracellular segment spans residues 211-220 (TNKVVPIISN). A helical transmembrane segment spans residues 221–241 (IIVYSFLNVALGWIYMLLIFF). At 242–280 (ASVFYITVLPKWFIYWKINYHKRDNDLLSTWDARTPILD) the chain is on the cytoplasmic side.

The protein belongs to the PIGC family. Component of the phosphatidylinositol N-acetylglucosaminyltransferase (GPI-GlcNAc transferase) complex composed of at least GPI1, GPI2, GPI3, GPI15, GPI19 and ERI1. Interacts with ERI1.

It localises to the membrane. It catalyses the reaction a 1,2-diacyl-sn-glycero-3-phospho-(1D-myo-inositol) + UDP-N-acetyl-alpha-D-glucosamine = a 6-(N-acetyl-alpha-D-glucosaminyl)-1-(1,2-diacyl-sn-glycero-3-phospho)-1D-myo-inositol + UDP + H(+). It functions in the pathway glycolipid biosynthesis; glycosylphosphatidylinositol-anchor biosynthesis. Part of the complex catalyzing the transfer of N-acetylglucosamine from UDP-N-acetylglucosamine to phosphatidylinositol, the first step of GPI biosynthesis. The protein is Phosphatidylinositol N-acetylglucosaminyltransferase GPI2 subunit (GPI2) of Saccharomyces cerevisiae (strain ATCC 204508 / S288c) (Baker's yeast).